The chain runs to 230 residues: Ureidoacrylate amidohydrolase RutB (230 aa).

D24 functions as the Proton acceptor in the catalytic mechanism. Residue K133 is part of the active site. The Nucleophile role is filled by C166.

Belongs to the isochorismatase family. RutB subfamily.

The catalysed reaction is (Z)-3-ureidoacrylate + H2O + H(+) = (Z)-3-aminoacrylate + NH4(+) + CO2. It catalyses the reaction (Z)-3-ureidoacrylate + H2O = (Z)-3-aminoacrylate + carbamate + H(+). The enzyme catalyses (Z)-2-methylureidoacrylate + H2O + H(+) = (Z)-2-methylaminoacrylate + NH4(+) + CO2. Its function is as follows. Hydrolyzes ureidoacrylate to form aminoacrylate and carbamate. The carbamate hydrolyzes spontaneously, thereby releasing one of the nitrogen atoms of the pyrimidine ring as ammonia and one of its carbon atoms as CO2. In Escherichia coli (strain B / BL21-DE3), this protein is Ureidoacrylate amidohydrolase RutB.